The chain runs to 157 residues: NAD(P)H-quinone oxidoreductase subunit N (157 aa).

The protein belongs to the complex I NdhN subunit family. As to quaternary structure, NDH-1 can be composed of about 15 different subunits; different subcomplexes with different compositions have been identified which probably have different functions.

It localises to the cellular thylakoid membrane. It carries out the reaction a plastoquinone + NADH + (n+1) H(+)(in) = a plastoquinol + NAD(+) + n H(+)(out). The enzyme catalyses a plastoquinone + NADPH + (n+1) H(+)(in) = a plastoquinol + NADP(+) + n H(+)(out). Functionally, NDH-1 shuttles electrons from an unknown electron donor, via FMN and iron-sulfur (Fe-S) centers, to quinones in the respiratory and/or the photosynthetic chain. The immediate electron acceptor for the enzyme in this species is believed to be plastoquinone. Couples the redox reaction to proton translocation, and thus conserves the redox energy in a proton gradient. Cyanobacterial NDH-1 also plays a role in inorganic carbon-concentration. This chain is NAD(P)H-quinone oxidoreductase subunit N, found in Picosynechococcus sp. (strain ATCC 27264 / PCC 7002 / PR-6) (Agmenellum quadruplicatum).